The primary structure comprises 370 residues: MAKDVFAVPIFFICFRECVETSIIVSVLLSFIKQTLGQEQDATTRKRLIRQVWWGVAIGLFISVCIGAGMIGAFYGYGKDHFASTEDLWEGIFSLIASVIITIMGAALLRVTKLQEKWRVKLAQALEAKPLTGGTFKNNLKLWAEKYAMFLLPFITVLREGLEAVVFIGGVSLSFPATAFPLPVFTGILAGVAIGYLLYRGGNQASLQIFLIISTCILYLVAAGLFSRGVWYLENNTWNHVIGGDAAETGAGPGSYDIRQSVWHVNCCSPLVNGGGGWGIFNAILGWTNSATYGSVLSYNLYWIAVIVWFVAMRHKERHGRLPVVDPLLNRLRGRKSAEPGNGEQDVEVSTIPSDLQTESKIPKSGASLV.

7 helical membrane passes run 5–25, 52–72, 88–108, 148–168, 179–199, 206–226, and 293–313; these read VFAV…SIIV, VWWG…GMIG, LWEG…GAAL, AMFL…VVFI, AFPL…YLLY, SLQI…AGLF, and YGSV…FVAM. The segment at 335–370 is disordered; the sequence is RKSAEPGNGEQDVEVSTIPSDLQTESKIPKSGASLV. Positions 351–360 are enriched in polar residues; that stretch reads TIPSDLQTES.

Belongs to the oxidase-dependent Fe transporter (OFeT) (TC 9.A.10.1) family.

It localises to the cell membrane. Its function is as follows. High affinity iron permease; part of the reductive iron assimilatory system (RIA), a siderophore-independent high affinity iron uptake mechanism. In Aspergillus fumigatus (strain ATCC MYA-4609 / CBS 101355 / FGSC A1100 / Af293) (Neosartorya fumigata), this protein is High affinity iron permease ftrA.